The following is a 325-amino-acid chain: Elongation factor P--(R)-beta-lysine ligase (325 aa).

76 to 78 serves as a coordination point for substrate; sequence SPE. ATP contacts are provided by residues 100–102 and asparagine 109; that span reads RNE. Substrate is bound at residue tyrosine 118. 244–245 contributes to the ATP binding site; the sequence is EL. A substrate-binding site is contributed by glutamate 251. Glycine 300 contributes to the ATP binding site.

Belongs to the class-II aminoacyl-tRNA synthetase family. EpmA subfamily. In terms of assembly, homodimer.

The enzyme catalyses D-beta-lysine + L-lysyl-[protein] + ATP = N(6)-((3R)-3,6-diaminohexanoyl)-L-lysyl-[protein] + AMP + diphosphate + H(+). In terms of biological role, with EpmB is involved in the beta-lysylation step of the post-translational modification of translation elongation factor P (EF-P). Catalyzes the ATP-dependent activation of (R)-beta-lysine produced by EpmB, forming a lysyl-adenylate, from which the beta-lysyl moiety is then transferred to the epsilon-amino group of a conserved specific lysine residue in EF-P. In Erwinia tasmaniensis (strain DSM 17950 / CFBP 7177 / CIP 109463 / NCPPB 4357 / Et1/99), this protein is Elongation factor P--(R)-beta-lysine ligase.